A 236-amino-acid polypeptide reads, in one-letter code: 2,3,4,5-tetrahydropyridine-2,6-dicarboxylate N-acetyltransferase (236 aa).

Belongs to the transferase hexapeptide repeat family. DapH subfamily.

The enzyme catalyses (S)-2,3,4,5-tetrahydrodipicolinate + acetyl-CoA + H2O = L-2-acetamido-6-oxoheptanedioate + CoA. It functions in the pathway amino-acid biosynthesis; L-lysine biosynthesis via DAP pathway; LL-2,6-diaminopimelate from (S)-tetrahydrodipicolinate (acetylase route): step 1/3. Functionally, catalyzes the transfer of an acetyl group from acetyl-CoA to tetrahydrodipicolinate. In Lactiplantibacillus plantarum (strain ATCC BAA-793 / NCIMB 8826 / WCFS1) (Lactobacillus plantarum), this protein is 2,3,4,5-tetrahydropyridine-2,6-dicarboxylate N-acetyltransferase.